A 202-amino-acid chain; its full sequence is Orotate phosphoribosyltransferase (202 aa).

Residues Arg-94, Lys-98, His-100, and 120-128 each bind 5-phospho-alpha-D-ribose 1-diphosphate; that span reads EDLISTGGS. Position 124 (Ser-124) interacts with orotate.

Belongs to the purine/pyrimidine phosphoribosyltransferase family. PyrE subfamily. In terms of assembly, homodimer. Requires Mg(2+) as cofactor.

It carries out the reaction orotidine 5'-phosphate + diphosphate = orotate + 5-phospho-alpha-D-ribose 1-diphosphate. The protein operates within pyrimidine metabolism; UMP biosynthesis via de novo pathway; UMP from orotate: step 1/2. Functionally, catalyzes the transfer of a ribosyl phosphate group from 5-phosphoribose 1-diphosphate to orotate, leading to the formation of orotidine monophosphate (OMP). The sequence is that of Orotate phosphoribosyltransferase from Staphylococcus haemolyticus (strain JCSC1435).